The following is a 141-amino-acid chain: 3-hydroxyacyl-[acyl-carrier-protein] dehydratase FabZ (141 aa).

H49 is an active-site residue.

The protein belongs to the thioester dehydratase family. FabZ subfamily.

The protein resides in the cytoplasm. It carries out the reaction a (3R)-hydroxyacyl-[ACP] = a (2E)-enoyl-[ACP] + H2O. Involved in unsaturated fatty acids biosynthesis. Catalyzes the dehydration of short chain beta-hydroxyacyl-ACPs and long chain saturated and unsaturated beta-hydroxyacyl-ACPs. In Fusobacterium nucleatum subsp. nucleatum (strain ATCC 25586 / DSM 15643 / BCRC 10681 / CIP 101130 / JCM 8532 / KCTC 2640 / LMG 13131 / VPI 4355), this protein is 3-hydroxyacyl-[acyl-carrier-protein] dehydratase FabZ.